The sequence spans 254 residues: Probable septum site-determining protein MinC (254 aa).

Belongs to the MinC family. In terms of assembly, interacts with MinD and FtsZ.

Cell division inhibitor that blocks the formation of polar Z ring septums. Rapidly oscillates between the poles of the cell to destabilize FtsZ filaments that have formed before they mature into polar Z rings. Prevents FtsZ polymerization. The polypeptide is Probable septum site-determining protein MinC (Burkholderia ambifaria (strain ATCC BAA-244 / DSM 16087 / CCUG 44356 / LMG 19182 / AMMD) (Burkholderia cepacia (strain AMMD))).